We begin with the raw amino-acid sequence, 93 residues long: Large ribosomal subunit protein uL23 (93 aa).

The protein belongs to the universal ribosomal protein uL23 family. Part of the 50S ribosomal subunit. Contacts protein L29, and trigger factor when it is bound to the ribosome.

One of the early assembly proteins it binds 23S rRNA. One of the proteins that surrounds the polypeptide exit tunnel on the outside of the ribosome. Forms the main docking site for trigger factor binding to the ribosome. This is Large ribosomal subunit protein uL23 from Sulfurovum sp. (strain NBC37-1).